We begin with the raw amino-acid sequence, 202 residues long: uncharacterized protein (202 aa).

In terms of domain architecture, START spans 1–202 (MRGILRMTVL…KGLRSAAEKR (202 aa)).

Its function is as follows. May play a role in the interaction of the bacterium with animal cells. This is an uncharacterized protein from Pseudomonas aeruginosa (strain ATCC 15692 / DSM 22644 / CIP 104116 / JCM 14847 / LMG 12228 / 1C / PRS 101 / PAO1).